Consider the following 333-residue polypeptide: Beta-ketoacyl-[acyl-carrier-protein] synthase III (333 aa).

Residues Cys-116 and His-258 contribute to the active site. The interval 259-263 (QANKR) is ACP-binding. Residue Asn-288 is part of the active site.

This sequence belongs to the thiolase-like superfamily. FabH family. Homodimer.

It localises to the cytoplasm. The enzyme catalyses malonyl-[ACP] + acetyl-CoA + H(+) = 3-oxobutanoyl-[ACP] + CO2 + CoA. It functions in the pathway lipid metabolism; fatty acid biosynthesis. Functionally, catalyzes the condensation reaction of fatty acid synthesis by the addition to an acyl acceptor of two carbons from malonyl-ACP. Catalyzes the first condensation reaction which initiates fatty acid synthesis and may therefore play a role in governing the total rate of fatty acid production. Possesses both acetoacetyl-ACP synthase and acetyl transacylase activities. Its substrate specificity determines the biosynthesis of branched-chain and/or straight-chain of fatty acids. The protein is Beta-ketoacyl-[acyl-carrier-protein] synthase III of Koribacter versatilis (strain Ellin345).